We begin with the raw amino-acid sequence, 367 residues long: Putative F-box protein At3g21130 (367 aa).

Residues 4–50 form the F-box domain; sequence KRNTVYLSEDLIVEILSRVSAVSLARLRTTSKRWNALVKDERLAKKH.

The protein is Putative F-box protein At3g21130 of Arabidopsis thaliana (Mouse-ear cress).